Here is a 349-residue protein sequence, read N- to C-terminus: GDSL esterase/lipase At2g19060 (349 aa).

The signal sequence occupies residues 1 to 25 (MADKMFKALLWAFATAVVMAEAVRG). The active-site Nucleophile is Ser37. Asn178 carries N-linked (GlcNAc...) asparagine glycosylation. Active-site residues include Asp317 and His320.

This sequence belongs to the 'GDSL' lipolytic enzyme family.

Its subcellular location is the secreted. In Arabidopsis thaliana (Mouse-ear cress), this protein is GDSL esterase/lipase At2g19060.